We begin with the raw amino-acid sequence, 527 residues long: Laccase-5 (527 aa).

The first 23 residues, 1–23 (MGKYHSFVNVVALSLSLSGRVFG), serve as a signal peptide directing secretion. The Plastocyanin-like 1 domain maps to 25–150 (IGPVTDLTIS…DGLRGPLVVY (126 aa)). N74 and N77 each carry an N-linked (GlcNAc...) asparagine glycan. H87, H89, H132, and H134 together coordinate Cu cation. Intrachain disulfides connect C108–C516 and C140–C230. N156, N209, N233, N242, N276, N317, N358, N366, N393, and N402 each carry an N-linked (GlcNAc...) asparagine glycan. The Plastocyanin-like 2 domain occupies 162 to 306 (VDDDTTVITL…GGVNSAILRY (145 aa)). One can recognise a Plastocyanin-like 3 domain in the interval 373–498 (TVPVLLQILS…AGFAIVWGED (126 aa)). Residues H425, H428, H430, H480, C481, H482, and H486 each contribute to the Cu cation site.

It belongs to the multicopper oxidase family. Homodimer. Requires Cu cation as cofactor.

It localises to the secreted. The enzyme catalyses 4 hydroquinone + O2 = 4 benzosemiquinone + 2 H2O. Lignin degradation and detoxification of lignin-derived products. This Trametes villosa (White-rot fungus) protein is Laccase-5 (LCC5).